Here is a 137-residue protein sequence, read N- to C-terminus: Nucleoside diphosphate kinase (137 aa).

ATP-binding residues include Lys9, Phe57, Arg85, Thr91, Arg102, and Asn112. The active-site Pros-phosphohistidine intermediate is the His115.

It belongs to the NDK family. Homotetramer. The cofactor is Mg(2+).

It is found in the cytoplasm. The enzyme catalyses a 2'-deoxyribonucleoside 5'-diphosphate + ATP = a 2'-deoxyribonucleoside 5'-triphosphate + ADP. The catalysed reaction is a ribonucleoside 5'-diphosphate + ATP = a ribonucleoside 5'-triphosphate + ADP. In terms of biological role, major role in the synthesis of nucleoside triphosphates other than ATP. The ATP gamma phosphate is transferred to the NDP beta phosphate via a ping-pong mechanism, using a phosphorylated active-site intermediate. The protein is Nucleoside diphosphate kinase of Campylobacter jejuni subsp. doylei (strain ATCC BAA-1458 / RM4099 / 269.97).